Here is a 320-residue protein sequence, read N- to C-terminus: 4-hydroxythreonine-4-phosphate dehydrogenase (320 aa).

Residue T132 coordinates substrate. Positions 161, 205, and 258 each coordinate a divalent metal cation. Substrate-binding residues include K266, N275, and R284.

It belongs to the PdxA family. In terms of assembly, homodimer. The cofactor is a divalent metal cation.

The protein localises to the cytoplasm. It catalyses the reaction 4-(phosphooxy)-L-threonine + NAD(+) = 3-amino-2-oxopropyl phosphate + CO2 + NADH. The protein operates within cofactor biosynthesis; pyridoxine 5'-phosphate biosynthesis; pyridoxine 5'-phosphate from D-erythrose 4-phosphate: step 4/5. Functionally, catalyzes the NAD(P)-dependent oxidation of 4-(phosphooxy)-L-threonine (HTP) into 2-amino-3-oxo-4-(phosphooxy)butyric acid which spontaneously decarboxylates to form 3-amino-2-oxopropyl phosphate (AHAP). In Aquifex aeolicus (strain VF5), this protein is 4-hydroxythreonine-4-phosphate dehydrogenase.